The chain runs to 306 residues: Palmitoyl-protein thioesterase 1 (306 aa).

The N-terminal stretch at 1–27 is a signal peptide; that stretch reads MASPSCLWLLAVALLPWTCAARALHHL. 3 disulfides stabilise this stretch: cysteine 45-cysteine 46, cysteine 96-cysteine 128, and cysteine 152-cysteine 160. Serine 115 is a catalytic residue. Asparagine 197, asparagine 212, and asparagine 232 each carry an N-linked (GlcNAc...) asparagine glycan. Catalysis depends on residues aspartate 233 and histidine 289.

Belongs to the palmitoyl-protein thioesterase family. Interacts with CLN5, ATP5F1A and ATP5F1B. Glycosylated.

The protein resides in the lysosome. It localises to the secreted. It is found in the golgi apparatus. The protein localises to the endoplasmic reticulum. The catalysed reaction is S-hexadecanoyl-L-cysteinyl-[protein] + H2O = L-cysteinyl-[protein] + hexadecanoate + H(+). It carries out the reaction hexadecanoyl-CoA + H2O = hexadecanoate + CoA + H(+). The enzyme catalyses S-hexadecanoyl-N-acetylcysteamine + H2O = N-acetylcysteamine + hexadecanoate + H(+). It catalyses the reaction S-hexadecanoyl-N-acetylcysteine methyl ester + H2O = N-acetylcysteine methyl ester + hexadecanoate + H(+). Palmitoylation reduces PPT1 enzymatic activity. Its function is as follows. Has thioesterase activity against fatty acid thioesters with 14 -18 carbons, including palmitoyl-CoA, S-palmitoyl-N-acetylcysteamine, and palmitoylated proteins. In contrast to PPT2, PPT1 can hydrolyze palmitoylated proteins and palmitoylcysteine. This is Palmitoyl-protein thioesterase 1 (PPT1) from Macaca fascicularis (Crab-eating macaque).